The primary structure comprises 152 residues: UPF0178 protein YaiI (152 aa).

This sequence belongs to the UPF0178 family.

The polypeptide is UPF0178 protein YaiI (Shigella boydii serotype 18 (strain CDC 3083-94 / BS512)).